Consider the following 846-residue polypeptide: Cap-specific mRNA (nucleoside-2'-O-)-methyltransferase 1 (846 aa).

A disordered region spans residues 1-81 (MKRKSDSEQQ…LPDTLAEGSS (81 aa)). Residues 2 to 20 (KRKSDSEQQPSVQCRKKKR) carry the Bipartite nuclear localization signal motif. The span at 27-45 (NLSSTSDDDTQYSNHGTQE) shows a compositional bias: polar residues. Residues 87–133 (YNSVSQKLMAKMGFREGEGLGKFGQGRKEIVETSKQKGRRGLGMVLK) enclose the G-patch domain. Substrate is bound by residues 203 to 207 (KSAFD) and Arg218. Residues 231–450 (FFLNRAAMKM…ERYVVCRGLK (220 aa)) enclose the RrmJ-type SAM-dependent 2'-O-MTase domain. Asn234 serves as a coordination point for S-adenosyl-L-methionine. The active site involves Lys239. S-adenosyl-L-methionine is bound by residues 277–283 (CAGPGGF) and 335–336 (DV). Asp364 is a catalytic residue. 374-376 (NIQ) serves as a coordination point for substrate. Lys404 serves as the catalytic Proton acceptor. Substrate is bound at residue Asn439. The region spanning 752–786 (KTINEPWSMAYSKSQKRKYFYNSKTKNSQFELPVE) is the WW domain.

The protein localises to the nucleus. The enzyme catalyses a 5'-end (N(7)-methyl 5'-triphosphoguanosine)-ribonucleoside in mRNA + S-adenosyl-L-methionine = a 5'-end (N(7)-methyl 5'-triphosphoguanosine)-(2'-O-methyl-ribonucleoside) in mRNA + S-adenosyl-L-homocysteine + H(+). S-adenosyl-L-methionine-dependent methyltransferase that mediates mRNA cap1 2'-O-ribose methylation to the 5'-cap structure of mRNAs. Methylates the ribose of the first nucleotide of a m(7)GpppG-capped mRNA and small nuclear RNA (snRNA) to produce m(7)GpppRm (cap1). Displays a preference for cap0 transcripts. Cap1 modification is linked to higher levels of translation. May be involved in the interferon response pathway. This chain is Cap-specific mRNA (nucleoside-2'-O-)-methyltransferase 1 (cmtr1), found in Xenopus laevis (African clawed frog).